Reading from the N-terminus, the 480-residue chain is Salicylate hydroxylase asL1 (480 aa).

Residues 17-37 traverse the membrane as a helical segment; it reads PMEIAIVGGGIVGVILAIGLT. Residues Glu47 and Ala60 each contribute to the FAD site. A glycan (N-linked (GlcNAc...) asparagine) is linked at Asn87. FAD is bound at residue Arg131. A glycan (N-linked (GlcNAc...) asparagine) is linked at Asn168. Active-site residues include Arg213 and Tyr246. Asn250 carries an N-linked (GlcNAc...) asparagine glycan. FAD-binding residues include Asp329 and Ala342. 2 N-linked (GlcNAc...) asparagine glycosylation sites follow: Asn400 and Asn464.

It belongs to the paxM FAD-dependent monooxygenase family. FAD is required as a cofactor.

It localises to the membrane. It functions in the pathway secondary metabolite biosynthesis; terpenoid biosynthesis. In terms of biological role, salicylate hydroxylase; part of the gene cluster that mediates the biosynthesis of xenovulene A, an unusual meroterpenoid that has potent inhibitory effects on the human gamma-aminobutyrate A (GABAA) benzodiazepine receptor. The first step of xenovulene A biosynthesis is the biosynthesis of 3-methylorcinaldehyde performed by the non-reducing polyketide synthase aspks1. The salicylate hydroxylase asL1 then catalyzes the oxidative dearomatization of 3-methylorcinaldehyde to yield a dearomatized hydroxycyclohexadione. The 2-oxoglutarate-dependent dioxygenase asL3 further catalyzes the oxidative ring expansion to provide the first tropolone metabolite. The cytochrome P450 monooxygenase asR2 allows the synthesis of tropolone hemiacetal. In parallel, a previously unrecognised class of terpene cyclase, asR6, produces alpha-humulene from farnesylpyrophosphate (FPP). The putative Diels-Alderase asR5 probably catalyzes the formation of the tropolone-humulene skeleton by linking humulene and the polyketide moiety. Oxidative-ring contractions catalyzed by asL4 and asL6 then processively remove carbon atoms from the polyketide to yield xenovulene A. The sequence is that of Salicylate hydroxylase asL1 from Sarocladium schorii (Acremonium strictum (strain IMI 501407)).